The chain runs to 153 residues: Arginine repressor (153 aa).

This sequence belongs to the ArgR family.

The protein resides in the cytoplasm. Its pathway is amino-acid biosynthesis; L-arginine biosynthesis [regulation]. In terms of biological role, regulates arginine biosynthesis genes. The protein is Arginine repressor of Actinobacillus pleuropneumoniae serotype 5b (strain L20).